Here is a 408-residue protein sequence, read N- to C-terminus: Aminopeptidase T (408 aa).

Residues E250, E316, E340, H345, H376, and D378 each coordinate a divalent metal cation.

It belongs to the peptidase M29 family. As to quaternary structure, homodimer. It depends on Co(2+) as a cofactor. Zn(2+) serves as cofactor. Requires Mg(2+) as cofactor.

Functionally, metal-dependent exopeptidase. This is Aminopeptidase T from Thermus thermophilus (strain ATCC 27634 / DSM 579 / HB8).